We begin with the raw amino-acid sequence, 329 residues long: uncharacterized protein (329 aa).

The first 32 residues, 1–32, serve as a signal peptide directing secretion; the sequence is MSQDRGPRRPRRLEKCALISASATVLSLTASG. The N-palmitoyl cysteine moiety is linked to residue Cys-33. Residue Cys-33 is the site of S-diacylglycerol cysteine attachment.

It is found in the cell membrane. This is an uncharacterized protein from Streptomyces coelicolor (strain ATCC BAA-471 / A3(2) / M145).